The sequence spans 311 residues: HPr kinase/phosphorylase (311 aa).

Active-site residues include His-138 and Lys-159. 153 to 160 contributes to the ATP binding site; that stretch reads GSSGIGKS. Ser-160 serves as a coordination point for Mg(2+). Catalysis depends on Asp-177, which acts as the Proton acceptor; for phosphorylation activity. Proton donor; for dephosphorylation activity. The interval 201-210 is important for the catalytic mechanism of both phosphorylation and dephosphorylation; it reads LEIRGVGIIN. Glu-202 contacts Mg(2+). The active site involves Arg-243. Residues 264–269 form an important for the catalytic mechanism of dephosphorylation region; it reads PVRPGR.

It belongs to the HPrK/P family. In terms of assembly, homohexamer. It depends on Mg(2+) as a cofactor.

The catalysed reaction is [HPr protein]-L-serine + ATP = [HPr protein]-O-phospho-L-serine + ADP + H(+). The enzyme catalyses [HPr protein]-O-phospho-L-serine + phosphate + H(+) = [HPr protein]-L-serine + diphosphate. Its function is as follows. Catalyzes the ATP- as well as the pyrophosphate-dependent phosphorylation of a specific serine residue in HPr, a phosphocarrier protein of the phosphoenolpyruvate-dependent sugar phosphotransferase system (PTS). HprK/P also catalyzes the pyrophosphate-producing, inorganic phosphate-dependent dephosphorylation (phosphorolysis) of seryl-phosphorylated HPr (P-Ser-HPr). The two antagonistic activities of HprK/P are regulated by several intracellular metabolites, which change their concentration in response to the absence or presence of rapidly metabolisable carbon sources (glucose, fructose, etc.) in the growth medium. Therefore, by controlling the phosphorylation state of HPr, HPrK/P is a sensor enzyme that plays a major role in the regulation of carbon metabolism and sugar transport: it mediates carbon catabolite repression (CCR), and regulates PTS-catalyzed carbohydrate uptake and inducer exclusion. In Brevibacillus brevis (strain 47 / JCM 6285 / NBRC 100599), this protein is HPr kinase/phosphorylase.